The primary structure comprises 578 residues: 15-cis-phytoene desaturase, chloroplastic/chromoplastic (578 aa).

The transit peptide at 1-87 directs the protein to the chloroplast and chromoplast; sequence MDTGCLSSMN…PLENTINFLE (87 aa). Residues A115, 134–135, K142, 159–160, and Y165 contribute to the FAD site; these read EA and HI. R300 is a binding site for substrate. FAD-binding residues include I342 and D531. A539 is a substrate binding site. M541 is a binding site for FAD.

The protein belongs to the carotenoid/retinoid oxidoreductase family. Homotetramer. Homotetramer is the active form of the enzyme. FAD serves as cofactor.

The protein localises to the plastid. It localises to the chloroplast. The protein resides in the chromoplast. It is found in the membrane. The enzyme catalyses 2 a plastoquinone + 15-cis-phytoene = 9,9',15-tri-cis-zeta-carotene + 2 a plastoquinol. Its pathway is carotenoid biosynthesis; lycopene biosynthesis. Inhibited by the herbicide norflurazon (NFZ). In terms of biological role, converts phytoene into zeta-carotene via the intermediary of phytofluene by the symmetrical introduction of two double bonds at the C-11 and C-11' positions of phytoene with a concomitant isomerization of two neighboring double bonds at the C9 and C9' positions from trans to cis. Active with decylplastoquinone (DPQ) as substrate. Also active with other benzoquinones, which are strongly preferred over naphthoquinones as substrates. This Oryza sativa subsp. indica (Rice) protein is 15-cis-phytoene desaturase, chloroplastic/chromoplastic (PDS1).